The sequence spans 106 residues: MDTSSPAAFVNGALLRRYIGQKVRAVIQVIRSDVGSVIGKSTDDQQIVVKGSPQPPLTTYLEVIGIAETDNTIRAEVWTNFGDSFDVQNYNELCKLANGEFRHLFI.

Met-1 is subject to N-acetylmethionine.

Belongs to the replication factor A protein 3 family. In terms of assembly, component of the heterotrimeric canonical replication protein A complex (RPA).

It is found in the nucleus. Functionally, as part of the replication protein A (RPA/RP-A), a single-stranded DNA-binding heterotrimeric complex, may play an essential role in DNA replication, recombination and repair. Binds and stabilizes single-stranded DNA intermediates, preventing complementary DNA reannealing and recruiting different proteins involved in DNA metabolism. The sequence is that of Replication protein A 14 kDa subunit B (RPA3B) from Arabidopsis thaliana (Mouse-ear cress).